Reading from the N-terminus, the 346-residue chain is FMRFamide-related peptides type HF-1 (346 aa).

A signal peptide spans M1–S19. Positions S20 to N45 are excised as a propeptide. At F51 the chain carries Phenylalanine amide. The propeptide occupies A54–S94. Position 100 is a phenylalanine amide (F100). Positions S103–D109 are excised as a propeptide. F115 carries the phenylalanine amide modification. Residues S118 to E203 constitute a propeptide that is removed on maturation. Residues Y137–E185 are disordered. Residues R141–L152 show a composition bias toward basic and acidic residues. The span at D160–K172 shows a compositional bias: polar residues. Residues F173–E185 are compositionally biased toward basic and acidic residues. F209 and F216 each carry phenylalanine amide. Residues G219 to D226 constitute a propeptide that is removed on maturation. A Phenylalanine amide modification is found at F232. The propeptide occupies S235–E243. Phenylalanine amide is present on residues F249 and F256. Positions G259–E267 are excised as a propeptide. Residue F273 is modified to Phenylalanine amide. The propeptide occupies S276 to I283. A Phenylalanine amide modification is found at F290. A propeptide spanning residues S293–D301 is cleaved from the precursor. Phenylalanine amide is present on residues F307 and F314. Positions S317–D325 are excised as a propeptide. Phenylalanine amide is present on residues F331 and F338. Residues G341–S346 constitute a propeptide that is removed on maturation.

Belongs to the FARP (FMRFamide related peptide) family. As to expression, central nervous system.

The protein resides in the secreted. Can function as both cardioregulatory hormones and transmitters and may regulate cardiovascular function. This is FMRFamide-related peptides type HF-1 from Cornu aspersum (Brown garden snail).